Reading from the N-terminus, the 833-residue chain is Leucine--tRNA ligase (833 aa).

The 'HIGH' region motif lies at 41-52 (PYPSGAGLHVGH). The 'KMSKS' region motif lies at 610 to 614 (KMSKS). Lys613 is a binding site for ATP.

It belongs to the class-I aminoacyl-tRNA synthetase family.

It is found in the cytoplasm. The enzyme catalyses tRNA(Leu) + L-leucine + ATP = L-leucyl-tRNA(Leu) + AMP + diphosphate. The polypeptide is Leucine--tRNA ligase (Streptococcus pneumoniae (strain 70585)).